Reading from the N-terminus, the 310-residue chain is Protein TIFY 6A (310 aa).

The 36-residue stretch at 141-176 (SKPLPPQLTIFYAGSVLVYQDIAPEKAQAIMLLAGN) folds into the Tify domain. The short motif at 259-284 (PQTRKASLARFLEKRKERVINVSPYY) is the Jas element. Residues 261-268 (TRKASLAR) carry the Nuclear localization signal motif.

Belongs to the TIFY/JAZ family. As to quaternary structure, homo- and heterodimer. Interacts with MYC2, AFPH2/NINJA, TIFY10A/JAZ1, TIFY6B/JAZ3, TIFY5A/JAZ8, TIFY9/JAZ10 and TIFY3A/JAZ11. Interacts with RHD6 and RSL1. Post-translationally, ubiquitinated. Targeted for degradation by the SCF(COI1) E3 ubiquitin ligase-proteasome pathway during jasmonate signaling.

The protein resides in the nucleus. Repressor of jasmonate responses. Interacts with and suppresses RHD6 and RSL1 transcription factor activities to negatively regulate jasmonate-stimulated root hair development. This Arabidopsis thaliana (Mouse-ear cress) protein is Protein TIFY 6A (TIFY6A).